The chain runs to 470 residues: MNYADKKILVLGMGKTGISMVKWLSRAGARVSVADTRTTPPNLELLSQIVPLETIFCGPFKAELFKDIDAIAISPGVAIAEPLVQAALQQGVSVIGDIELFAIALDQHAPPGTKILAITGSNGKTTVATMVGEMARNTGWDVEVAGNIGLAALDALMQRIDTGKWPHLWVLELSSFQLETTSSLRPNAAVVLNLSEDHLDRYRIIEEYAAAKARIFPDPHNSCVQVLNREDARVYAMAHENSKQLTFGLSAPAFDDEFGVLPSGSDLWLAQGTTRLMKVSELAVAGLHNAANALAALALCRAIDLPFEPLLHALHIFKGLPHRMQKIAEFNGVTFYDDSKSTNVGSAVAALNGFRKNVILIAGGDGKGQDFSPLEQPVSKHTRGVVLLGRDAEKISQAIQGCNVPVHRVATMDEAVRVSFLLAERGDSVLLSPACASLDMFNNYIHRAEVFTTAVQGIEHKFILTAQTCH.

Residue 120–126 coordinates ATP; that stretch reads GSNGKTT.

This sequence belongs to the MurCDEF family.

It is found in the cytoplasm. It carries out the reaction UDP-N-acetyl-alpha-D-muramoyl-L-alanine + D-glutamate + ATP = UDP-N-acetyl-alpha-D-muramoyl-L-alanyl-D-glutamate + ADP + phosphate + H(+). The protein operates within cell wall biogenesis; peptidoglycan biosynthesis. In terms of biological role, cell wall formation. Catalyzes the addition of glutamate to the nucleotide precursor UDP-N-acetylmuramoyl-L-alanine (UMA). The protein is UDP-N-acetylmuramoylalanine--D-glutamate ligase of Nitrosomonas eutropha (strain DSM 101675 / C91 / Nm57).